A 353-amino-acid chain; its full sequence is Protein MGF 360-10L (353 aa).

The ANK repeat unit spans residues aspartate 57–isoleucine 89. Asparagine 172 carries N-linked (GlcNAc...) asparagine; by host glycosylation. 2 helical membrane-spanning segments follow: residues leucine 206–glutamate 228 and asparagine 249–isoleucine 271. Asparagine 342 is a glycosylation site (N-linked (GlcNAc...) asparagine; by host).

It belongs to the asfivirus MGF 360 family.

The protein localises to the host membrane. Its function is as follows. Plays a role in virus cell tropism, and may be required for efficient virus replication in macrophages. This African swine fever virus (isolate Warthog/Namibia/Wart80/1980) (ASFV) protein is Protein MGF 360-10L.